The sequence spans 271 residues: MARRLSLLAVVLAMVAAVSASTAAAQSCGCASDQCCSKWGFCGTGSDYCGTGCQAGPCDVPATNDVSVASIVTPEFFAALVAQADDGCAAKGFYTRDAFLTAAGGYPSFGRTGSVDDSKREIAAFFAHANHETIKFCYIEEIDGPSKNYCDETSTQWPCMAGKGYYGRGPLQISWNFNYGPAGQSIGFDGLGDPDAVARSPVLAFQTALWYWTNNVHDAFVSGQGFGATIRAINGALECDGKNPTAVSNRVAYYQQFCQQFGVDPGSNLTC.

The N-terminal stretch at 1 to 20 (MARRLSLLAVVLAMVAAVSA) is a signal peptide. The region spanning 25–60 (AQSCGCASDQCCSKWGFCGTGSDYCGTGCQAGPCDV) is the Chitin-binding type-1 domain. Disulfide bonds link cysteine 28/cysteine 36, cysteine 30/cysteine 42, cysteine 35/cysteine 49, cysteine 88/cysteine 137, cysteine 150/cysteine 159, and cysteine 239/cysteine 271. Residue glutamate 132 is the Proton donor of the active site. N-linked (GlcNAc...) asparagine glycosylation occurs at asparagine 268.

This sequence belongs to the glycosyl hydrolase 19 family. Chitinase class IV subfamily. Expressed in roots, leaves, sheaths and meristems.

It catalyses the reaction Random endo-hydrolysis of N-acetyl-beta-D-glucosaminide (1-&gt;4)-beta-linkages in chitin and chitodextrins.. May function in reproductive organs during embryogenesis and seed maturation. This Oryza sativa subsp. japonica (Rice) protein is Chitinase 6 (Cht6).